Reading from the N-terminus, the 505-residue chain is Lysine--tRNA ligase (505 aa).

Mg(2+) contacts are provided by Glu-415 and Glu-422.

Belongs to the class-II aminoacyl-tRNA synthetase family. Homodimer. Mg(2+) serves as cofactor.

The protein localises to the cytoplasm. The catalysed reaction is tRNA(Lys) + L-lysine + ATP = L-lysyl-tRNA(Lys) + AMP + diphosphate. This chain is Lysine--tRNA ligase, found in Shigella dysenteriae serotype 1 (strain Sd197).